A 463-amino-acid polypeptide reads, in one-letter code: Sporulation-specific protein 22 (463 aa).

The N-terminal stretch at 1–25 (MNRITRKSCLFAIIFASLFVTHALG) is a signal peptide. 5 LRR repeats span residues 127-147 (SPELIRIQAGNLNKIEGLFQL), 185-206 (IEIIKDIVISDTSLANIENFNK), 207-233 (VQEIDTFNINNNRFLETIHSNVKTIRG), 251-275 (LREVENITIRDTSLVYLPQLTKVKS), and 302-325 (INNVNLIKVNLENLTDIQGGLMIA). Asn256, Asn314, and Asn327 each carry an N-linked (GlcNAc...) asparagine glycan. The GPI-anchor amidated asparagine moiety is linked to residue Asn440. The propeptide at 441 to 463 (SANPSMQLDPLLFGTCLVAMLLF) is removed in mature form.

The protein belongs to the SPS2 family.

Its subcellular location is the cell membrane. Redundant with SPS2 for the organization of the beta-glucan layer of the spore wall. The chain is Sporulation-specific protein 22 (SPS22) from Saccharomyces cerevisiae (strain ATCC 204508 / S288c) (Baker's yeast).